Consider the following 451-residue polypeptide: D(1A) dopamine receptor (451 aa).

Residues 1–22 lie on the Extracellular side of the membrane; that stretch reads MTFNITSMDEDVLLTERESSFR. The N-linked (GlcNAc...) asparagine glycan is linked to Asn4. Residues 23-48 traverse the membrane as a helical segment; the sequence is VLTGCFLSVLILSTLLGNTLVCAAVI. The Cytoplasmic portion of the chain corresponds to 49–59; that stretch reads RFRHLRSKVTN. Residues 60–86 traverse the membrane as a helical segment; it reads FFVISLAVSDLLVAVLVMPWKAVAEIA. Topologically, residues 87-95 are extracellular; it reads GFWPFGTFC. Cys95 and Cys185 are oxidised to a cystine. The helical transmembrane segment at 96 to 118 threads the bilayer; it reads NIWVAFDIMCSTASILNLCVISV. At 119 to 137 the chain is on the cytoplasmic side; it reads DRYWAISSPFRYERKMTPK. A helical membrane pass occupies residues 138–162; that stretch reads VAFIMIGVAWTLSVLISFIPVQLNW. Over 163 to 191 the chain is Extracellular; that stretch reads HKAKTTSFFDLNITLHDRTMDNCDSSLNR. A helical transmembrane segment spans residues 192–217; it reads TYAISSSLISFYIPVAIMIVTYTRIY. Topologically, residues 218 to 271 are cytoplasmic; sequence RIAAKQIRRISALERAAVHAKNCQNSTSNRNSLDCQQPESSLKTSFKRETKVLK. Residues 272-298 traverse the membrane as a helical segment; it reads TLSVIMGVFVCCWLPFFILNCIVPFCD. Residues 299 to 315 lie on the Extracellular side of the membrane; sequence PSLTTSGTEPFCISSTT. A helical transmembrane segment spans residues 316 to 340; that stretch reads FDVFVWFGWANSSLNPIIYAFNADF. The Cytoplasmic segment spans residues 341–451; that stretch reads RKAFSNLLGC…PITQNGQPKT (111 aa). Cys350 carries the S-palmitoyl cysteine lipid modification.

This sequence belongs to the G-protein coupled receptor 1 family. In terms of tissue distribution, brain.

It localises to the cell membrane. The protein resides in the cell projection. Its subcellular location is the cilium membrane. Functionally, dopamine receptor whose activity is mediated by G proteins which activate adenylyl cyclase. The sequence is that of D(1A) dopamine receptor (drd1) from Xenopus laevis (African clawed frog).